The following is a 529-amino-acid chain: Zinc finger protein 490 (529 aa).

Residues 1-53 (MRRNSSLSFQMERPLEEQVQSKWSSSQGRTGTGGSDVLQMQNSEHHGQSIKTQ) form a disordered region. Positions 57–132 (ISLEDVAVNF…ALCENKEDCP (76 aa)) constitute a KRAB domain. 13 C2H2-type zinc fingers span residues 156 to 178 (CDCS…MRSH), 194 to 216 (HKCK…ERIH), 222 to 244 (YECK…IRIH), 250 to 272 (YECK…EKNH), 278 to 300 (YKCK…ERTH), 306 to 328 (YECK…EKTH), 334 to 356 (FVCR…VKTH), 362 to 384 (YTCK…ERTH), 390 to 412 (YECK…ERVH), 418 to 440 (YECK…ERTH), 446 to 468 (YECK…ERSH), 474 to 496 (CECK…KRIH), and 502 to 524 (FQCR…ERTH).

This sequence belongs to the krueppel C2H2-type zinc-finger protein family.

Its subcellular location is the nucleus. In terms of biological role, may be involved in transcriptional regulation. This chain is Zinc finger protein 490 (ZNF490), found in Homo sapiens (Human).